A 314-amino-acid chain; its full sequence is Homoserine O-succinyltransferase (314 aa).

The active-site Acyl-thioester intermediate is C142. Substrate contacts are provided by K163 and S192. H235 serves as the catalytic Proton acceptor. Residue E237 is part of the active site. R249 contacts substrate.

The protein belongs to the MetA family.

It is found in the cytoplasm. The enzyme catalyses L-homoserine + succinyl-CoA = O-succinyl-L-homoserine + CoA. It participates in amino-acid biosynthesis; L-methionine biosynthesis via de novo pathway; O-succinyl-L-homoserine from L-homoserine: step 1/1. Its function is as follows. Transfers a succinyl group from succinyl-CoA to L-homoserine, forming succinyl-L-homoserine. The sequence is that of Homoserine O-succinyltransferase from Shewanella woodyi (strain ATCC 51908 / MS32).